The primary structure comprises 1178 residues: Ubiquitin carboxyl-terminal hydrolase cyk-3 (1178 aa).

3 EF-hand domains span residues 28 to 60 (EEYR…GAQI), 175 to 210 (FPDS…LCRG), and 211 to 246 (PLPG…LNVP). Ca(2+) contacts are provided by Asp-188, Asn-190, Asp-192, Gln-194, Glu-199, Asp-224, Asp-226, Asp-228, and Glu-235. In terms of domain architecture, DUSP spans 296–410 (ESRKMELQIV…VDSQFTRKYL (115 aa)). A USP domain is found at 570–1175 (VGLVNYGNFC…GAYLLFYERK (606 aa)). The Nucleophile role is filled by Cys-579. Residues 681–725 (SNKSLHPSPEESEGTDSNKLSDSSKKKEADKEEADEEKAERSWTE) form a disordered region. Residue His-1134 is the Proton acceptor of the active site.

It belongs to the peptidase C19 family. As to expression, expressed in excretory cells, coelomocytes, head neurons, hypodermal cells, germ cells, oocytes, sperm and pharynx (at protein level).

The protein resides in the nucleus. It localises to the cytoplasm. Its subcellular location is the cytoskeleton. The protein localises to the microtubule organizing center. The enzyme catalyses Thiol-dependent hydrolysis of ester, thioester, amide, peptide and isopeptide bonds formed by the C-terminal Gly of ubiquitin (a 76-residue protein attached to proteins as an intracellular targeting signal).. Functionally, ubiquitin-protein hydrolase which cleaves ubiquitin from ubiquitinated proteins. Plays a role in embryo osmoregulation. Probably by regulating osmosis, controls actin redistribution in the 1-cell embryos and thus actin-dependent processes such as cytokinesis and P-granules segregation. During the first embryonic mitotic division, involved in the formation of a functional microtubule organizing center provided by the male pronucleus. Acts as a positive regulator of the mTORC1 signaling. This is Ubiquitin carboxyl-terminal hydrolase cyk-3 from Caenorhabditis elegans.